The chain runs to 363 residues: Succinyl-diaminopimelate desuccinylase (363 aa).

Zn(2+) is bound at residue histidine 63. Residue aspartate 65 is part of the active site. Residue aspartate 94 participates in Zn(2+) binding. The active-site Proton acceptor is the glutamate 123. Zn(2+) contacts are provided by glutamate 124, glutamate 152, and histidine 337.

The protein belongs to the peptidase M20A family. DapE subfamily. Homodimer. Zn(2+) is required as a cofactor. It depends on Co(2+) as a cofactor.

It carries out the reaction N-succinyl-(2S,6S)-2,6-diaminopimelate + H2O = (2S,6S)-2,6-diaminopimelate + succinate. It participates in amino-acid biosynthesis; L-lysine biosynthesis via DAP pathway; LL-2,6-diaminopimelate from (S)-tetrahydrodipicolinate (succinylase route): step 3/3. Its function is as follows. Catalyzes the hydrolysis of N-succinyl-L,L-diaminopimelic acid (SDAP), forming succinate and LL-2,6-diaminopimelate (DAP), an intermediate involved in the bacterial biosynthesis of lysine and meso-diaminopimelic acid, an essential component of bacterial cell walls. The chain is Succinyl-diaminopimelate desuccinylase from Campylobacter concisus (strain 13826).